The primary structure comprises 984 residues: Putative formate dehydrogenase SAUSA300_2258 (984 aa).

One can recognise a 2Fe-2S ferredoxin-type domain in the interval E3 to D79. [2Fe-2S] cluster is bound by residues C37, C48, C51, and C63. The 4Fe-4S His(Cys)3-ligated-type domain occupies D79–G119. The [4Fe-4S] cluster site is built by H95, C99, C102, C109, C147, C150, C153, C157, C190, C193, C196, C200, C264, C267, C271, and C299. 4Fe-4S ferredoxin-type domains follow at residues P138–T165 and N181–E211. Residues M252 to K984 form a formate dehydrogenase region. A 4Fe-4S Mo/W bis-MGD-type domain is found at I257–Q313.

This sequence in the C-terminal section; belongs to the prokaryotic molybdopterin-containing oxidoreductase family. [2Fe-2S] cluster serves as cofactor. [4Fe-4S] cluster is required as a cofactor. It depends on Mo-bis(molybdopterin guanine dinucleotide) as a cofactor.

It catalyses the reaction formate + NAD(+) = CO2 + NADH. The sequence is that of Putative formate dehydrogenase SAUSA300_2258 from Staphylococcus aureus (strain USA300).